The chain runs to 369 residues: Anthranilate phosphoribosyltransferase (369 aa).

5-phospho-alpha-D-ribose 1-diphosphate contacts are provided by residues Gly-99, 102-103, 109-112, 127-135, and Ser-139; these read GD, NVST, and KHGNRGVSS. Gly-99 provides a ligand contact to anthranilate. Ser-111 serves as a coordination point for Mg(2+). Residue Asn-130 participates in anthranilate binding. Arg-185 contacts anthranilate. Mg(2+) is bound by residues Asp-244 and Glu-245.

This sequence belongs to the anthranilate phosphoribosyltransferase family. As to quaternary structure, homodimer. The cofactor is Mg(2+).

The enzyme catalyses N-(5-phospho-beta-D-ribosyl)anthranilate + diphosphate = 5-phospho-alpha-D-ribose 1-diphosphate + anthranilate. The protein operates within amino-acid biosynthesis; L-tryptophan biosynthesis; L-tryptophan from chorismate: step 2/5. In terms of biological role, catalyzes the transfer of the phosphoribosyl group of 5-phosphorylribose-1-pyrophosphate (PRPP) to anthranilate to yield N-(5'-phosphoribosyl)-anthranilate (PRA). This Psychrobacter sp. (strain PRwf-1) protein is Anthranilate phosphoribosyltransferase.